A 149-amino-acid chain; its full sequence is Large ribosomal subunit protein bL9 (149 aa).

The protein belongs to the bacterial ribosomal protein bL9 family.

Its function is as follows. Binds to the 23S rRNA. This Persephonella marina (strain DSM 14350 / EX-H1) protein is Large ribosomal subunit protein bL9.